The following is a 433-amino-acid chain: Enolase (433 aa).

Glutamine 167 is a binding site for (2R)-2-phosphoglycerate. Catalysis depends on glutamate 209, which acts as the Proton donor. Aspartate 246 is a Mg(2+) binding site. The Plasminogen-binding motif motif lies at 252 to 260 (FYDAEKKEY). 2 residues coordinate Mg(2+): glutamate 291 and aspartate 318. (2R)-2-phosphoglycerate contacts are provided by lysine 343, arginine 372, serine 373, and lysine 394. Lysine 343 functions as the Proton acceptor in the catalytic mechanism.

It belongs to the enolase family. As to quaternary structure, component of the RNA degradosome, a multiprotein complex involved in RNA processing and mRNA degradation. Mg(2+) is required as a cofactor.

Its subcellular location is the cell inner membrane. The protein resides in the cell outer membrane. The protein localises to the cytoplasm. It localises to the secreted. It is found in the cell surface. The enzyme catalyses (2R)-2-phosphoglycerate = phosphoenolpyruvate + H2O. It participates in carbohydrate degradation; glycolysis; pyruvate from D-glyceraldehyde 3-phosphate: step 4/5. Catalyzes the reversible conversion of 2-phosphoglycerate (2-PG) into phosphoenolpyruvate (PEP). It is essential for the degradation of carbohydrates via glycolysis. Its function is as follows. 'Moonlights' as a plasminogen receptor and plasmin activator. Binds host (human) plasminogen in vitro. Binds human plasmin and plasminogen on the cell surface; enhances the activity of host tissue-specific plasminogen activator (tPA). Plasmin bound to bacteria is partially protected from its physiological inhibitor alpha-2AP (SERPINF2). This is Enolase from Aeromonas hydrophila.